A 137-amino-acid chain; its full sequence is uncharacterized protein (137 aa).

4 helical membrane passes run 14 to 34 (AVVV…GSIS), 48 to 68 (YHII…SLSI), 84 to 104 (FFTI…LGLT), and 109 to 129 (HIPS…LNLF).

Its subcellular location is the cell membrane. This is an uncharacterized protein from Methanocaldococcus jannaschii (strain ATCC 43067 / DSM 2661 / JAL-1 / JCM 10045 / NBRC 100440) (Methanococcus jannaschii).